The primary structure comprises 57 residues: MAVPKRRMSRANTRSRRAQWKAEKTELVGVTVAGQRHKVPRRLLKAARLDLIDLDRR.

Residues 1 to 19 (MAVPKRRMSRANTRSRRAQ) are compositionally biased toward basic residues. The disordered stretch occupies residues 1-20 (MAVPKRRMSRANTRSRRAQW).

The protein belongs to the bacterial ribosomal protein bL32 family.

This chain is Large ribosomal subunit protein bL32, found in Mycobacterium avium (strain 104).